A 551-amino-acid chain; its full sequence is UvrABC system protein C (551 aa).

The GIY-YIG domain maps to 12–87 (EKPGVYIFKN…IFKHKPKYNI (76 aa)). The 36-residue stretch at 193–228 (EFVKDYIEQKMNYHSKMLDFENAAKYRDLLLSFEKL) folds into the UVR domain.

The protein belongs to the UvrC family. In terms of assembly, interacts with UvrB in an incision complex.

The protein localises to the cytoplasm. Functionally, the UvrABC repair system catalyzes the recognition and processing of DNA lesions. UvrC both incises the 5' and 3' sides of the lesion. The N-terminal half is responsible for the 3' incision and the C-terminal half is responsible for the 5' incision. This chain is UvrABC system protein C, found in Thermosipho africanus (strain TCF52B).